The following is a 443-amino-acid chain: MSNMTPREIVHELDSHIVGQSDAKRAVAIALRNRWRRMQLDKDLRNEVTPKNILMIGPTGVGKTEIARRLAKLAHAPFIKVEATKFTEVGYVGKEVETIIRDLADMAIKMVKESEMDRVKHLAEEAAEERILDVLLPPARDGFGNDEKSDDSNTRQIFRKKLREGKLDDKEIELDLAAPQVGVEIMAPPGMEDMTSQLQNMFQNMSSEKTNKRKLKIKDALKALQEEEAAKIVNQDDIKQKAIDAVEQNGIVFIDEIDKICKRADSSGGGDVSREGVQRDLLPLVEGSTVSTKHGMIKTDHILFIASGAFQMTKPSDLIPELQGRLPIRVELQALTADDFVRILTEPFASLTEQYIALLATEGVSVTFTDDGIKAIADSAWQVNETTENIGARRLHTMMERLVEDLSFNADQRSGETISIDQAYVTKILSEVVKDEDLSRFIL.

Residues Val18, 60 to 65 (GVGKTE), Asp255, Glu321, and Arg393 contribute to the ATP site.

This sequence belongs to the ClpX chaperone family. HslU subfamily. A double ring-shaped homohexamer of HslV is capped on each side by a ring-shaped HslU homohexamer. The assembly of the HslU/HslV complex is dependent on binding of ATP.

It localises to the cytoplasm. ATPase subunit of a proteasome-like degradation complex; this subunit has chaperone activity. The binding of ATP and its subsequent hydrolysis by HslU are essential for unfolding of protein substrates subsequently hydrolyzed by HslV. HslU recognizes the N-terminal part of its protein substrates and unfolds these before they are guided to HslV for hydrolysis. This is ATP-dependent protease ATPase subunit HslU from Colwellia psychrerythraea (strain 34H / ATCC BAA-681) (Vibrio psychroerythus).